The primary structure comprises 289 residues: O-methyltransferase asqN (289 aa).

Asp-155 contacts S-adenosyl-L-methionine. The Proton acceptor role is filled by His-195.

Belongs to the class I-like SAM-binding methyltransferase superfamily. Cation-independent O-methyltransferase family.

It participates in secondary metabolite biosynthesis. It functions in the pathway alkaloid biosynthesis. The protein operates within mycotoxin biosynthesis. Its function is as follows. O-methyltransferase; part of the gene cluster that mediates the biosynthesis of the aspoquinolone mycotoxins. The role of asqN within the aspoquinolone pathway has still to be determined. The first step of the pathway is catalyzed by the nonribosomal peptide synthetase asqK that condenses anthranilic acid and O-methyl-L-tyrosine to produce 4'-methoxycyclopeptin. 4'-methoxycyclopeptin is then converted to 4'-methoxydehydrocyclopeptin by the ketoglutarate-dependent dioxygenase asqJ. AsqJ also converts its first product 4'-methoxydehydrocyclopeptin to 4'-methoxycyclopenin. The following conversion of 4'-methoxycyclopenin into 4'-methoxyviridicatin is catalyzed by the cyclopenase asqI. 4'-methoxyviridicatin is the precursor of quinolone natural products, and is further converted to quinolinone B. The prenyltransferase asqH1 then catalyzes the canonical Friedel-Crafts alkylation of quinolinone B with dimethylallyl cation to yield dimethylallyl quinolone, which is subjected to FAD-dependent dehydrogenation by the FAD-linked oxidoreductase asqF to yield conjugated aryl diene. The delta(3') double bond then serves as the site of the second alkylation with DMAPP catalyzed by the prenyltransferase asqH2 to yield a carbenium ion intermediate, which can be attacked by H(2)O to yield a styrenyl quinolone containing a C3'-hydroxyprenyl chain. The FAD-dependent monooxygenase asqG performs epoxidation of the terminal C7'-C8' olefin. Finally, after dehydratation of the epoxide at C3 by asqC, the quinolone epoxide rearrangement protein asqO catalyzes an enzymatic 3-exo-tet cyclization to yield the cyclopropyl-THF ring system in aspoquinolone. This Emericella nidulans (strain FGSC A4 / ATCC 38163 / CBS 112.46 / NRRL 194 / M139) (Aspergillus nidulans) protein is O-methyltransferase asqN.